The sequence spans 187 residues: MSRIGKRPIPLPKNVTLTLDGQQVTVKGPKGQLSRVFPPEVNVVQEGEAIVVKRRDDSRPAKERHGLCRTLLANMVEGVSQGFTKKLEIQGVGYRAQLQGKTLVLSMGYSHPVEIVPPEGITLEIEDNQGKKVQQGTIVLVSGIDKELVGNTSARIRAVRPPEPYKGKGIRYMGEFVRRKVGKTGKK.

It belongs to the universal ribosomal protein uL6 family. As to quaternary structure, part of the 50S ribosomal subunit.

This protein binds to the 23S rRNA, and is important in its secondary structure. It is located near the subunit interface in the base of the L7/L12 stalk, and near the tRNA binding site of the peptidyltransferase center. In Thermosynechococcus vestitus (strain NIES-2133 / IAM M-273 / BP-1), this protein is Large ribosomal subunit protein uL6.